We begin with the raw amino-acid sequence, 205 residues long: Imidazoleglycerol-phosphate dehydratase (205 aa).

The disordered stretch occupies residues 1 to 27; sequence MKQASPRAGGAKARRGQVARKTKETDV.

Belongs to the imidazoleglycerol-phosphate dehydratase family.

It is found in the cytoplasm. It carries out the reaction D-erythro-1-(imidazol-4-yl)glycerol 3-phosphate = 3-(imidazol-4-yl)-2-oxopropyl phosphate + H2O. Its pathway is amino-acid biosynthesis; L-histidine biosynthesis; L-histidine from 5-phospho-alpha-D-ribose 1-diphosphate: step 6/9. This chain is Imidazoleglycerol-phosphate dehydratase, found in Anaeromyxobacter sp. (strain Fw109-5).